The following is a 294-amino-acid chain: N-acetylmuramic acid 6-phosphate etherase (294 aa).

Residues 54-217 (VIASFRKGGR…STTSMIGVGK (164 aa)) form the SIS domain. Glu-82 (proton donor) is an active-site residue. The active site involves Glu-113.

It belongs to the GCKR-like family. MurNAc-6-P etherase subfamily. As to quaternary structure, homodimer.

It carries out the reaction N-acetyl-D-muramate 6-phosphate + H2O = N-acetyl-D-glucosamine 6-phosphate + (R)-lactate. It functions in the pathway amino-sugar metabolism; N-acetylmuramate degradation. Specifically catalyzes the cleavage of the D-lactyl ether substituent of MurNAc 6-phosphate, producing GlcNAc 6-phosphate and D-lactate. The chain is N-acetylmuramic acid 6-phosphate etherase from Exiguobacterium sp. (strain ATCC BAA-1283 / AT1b).